The chain runs to 316 residues: MTKEFHHVTVLLHETIDMLDVKPDGIYVDATLGGAGHSEYLLSKLSEKGHLYAFDQDQNAIDNAQKRLAPYIEKGMVTFIKDNFRHLQARLREAGVQEIDGICYDLGVSSPQLDQRERGFSYKKDAPLDMRMNQDASLTAYEVVNHYDYHDLVRIFFKYGEDKFSKQIARKIEQAREVKPIETTTELAEIIKLVKPAKELKKKGHPAKQIFQAIRIEVNDELGAADESIQQAMDMLALDGRISVITFHSLEDRLTKQLFKEASTVEVPKGLPFIPDDLKPKMELVSRKPILPSAEELEANNRSHSAKLRVARKIHK.

S-adenosyl-L-methionine contacts are provided by residues 35–37, aspartate 55, phenylalanine 84, aspartate 105, and glutamine 112; that span reads AGH.

It belongs to the methyltransferase superfamily. RsmH family.

Its subcellular location is the cytoplasm. The catalysed reaction is cytidine(1402) in 16S rRNA + S-adenosyl-L-methionine = N(4)-methylcytidine(1402) in 16S rRNA + S-adenosyl-L-homocysteine + H(+). Its function is as follows. Specifically methylates the N4 position of cytidine in position 1402 (C1402) of 16S rRNA. The protein is Ribosomal RNA small subunit methyltransferase H of Streptococcus pneumoniae (strain P1031).